The chain runs to 377 residues: Acetylornithine aminotransferase (377 aa).

Pyridoxal 5'-phosphate contacts are provided by residues Gly-94 to Thr-95 and Phe-121. Arg-124 serves as a coordination point for N(2)-acetyl-L-ornithine. Residue Asp-206–Gln-209 coordinates pyridoxal 5'-phosphate. Lys-235 carries the post-translational modification N6-(pyridoxal phosphate)lysine. Ser-263 provides a ligand contact to N(2)-acetyl-L-ornithine. Thr-264 serves as a coordination point for pyridoxal 5'-phosphate.

Belongs to the class-III pyridoxal-phosphate-dependent aminotransferase family. ArgD subfamily. Homodimer. Pyridoxal 5'-phosphate is required as a cofactor.

The protein localises to the cytoplasm. It carries out the reaction N(2)-acetyl-L-ornithine + 2-oxoglutarate = N-acetyl-L-glutamate 5-semialdehyde + L-glutamate. It functions in the pathway amino-acid biosynthesis; L-arginine biosynthesis; N(2)-acetyl-L-ornithine from L-glutamate: step 4/4. In Lactococcus lactis subsp. lactis (strain IL1403) (Streptococcus lactis), this protein is Acetylornithine aminotransferase.